Reading from the N-terminus, the 663-residue chain is Beta-galactosidase YesZ (663 aa).

Arg106 is a binding site for substrate. Cys110 contributes to the Zn(2+) binding site. Residue Asn144 participates in substrate binding. Catalysis depends on Glu145, which acts as the Proton donor. Zn(2+) contacts are provided by Cys153, Cys155, and Cys158. Glu296 acts as the Nucleophile in catalysis. 345–348 (EISH) is a substrate binding site.

Belongs to the glycosyl hydrolase 42 family. As to quaternary structure, homotrimer.

The enzyme catalyses Hydrolysis of terminal non-reducing beta-D-galactose residues in beta-D-galactosides.. Functionally, may play a role in the degradation of rhamnogalacturonan derived from plant cell walls. The chain is Beta-galactosidase YesZ (yesZ) from Bacillus subtilis (strain 168).